We begin with the raw amino-acid sequence, 129 residues long: MSNIPTDLRYAATHEWVRPEGDGVFTVGISEHAQGLLGDMVFVELPDVGDAVSTGDDICVAESVKAASDVYAPISGEVVEVNEDLEDSPELVNSDPYGDGWLFKIKADDAAEVEGLLDAEGYENSIDEE.

The Lipoyl-binding domain maps to 24–106; it reads VFTVGISEHA…YGDGWLFKIK (83 aa). Lys65 bears the N6-lipoyllysine mark.

Belongs to the GcvH family. The glycine cleavage system is composed of four proteins: P, T, L and H. The cofactor is (R)-lipoate.

Functionally, the glycine cleavage system catalyzes the degradation of glycine. The H protein shuttles the methylamine group of glycine from the P protein to the T protein. This chain is Glycine cleavage system H protein, found in Alteromonas mediterranea (strain DSM 17117 / CIP 110805 / LMG 28347 / Deep ecotype).